The chain runs to 172 residues: S-ribosylhomocysteine lyase (172 aa).

H54, H58, and C128 together coordinate Fe cation.

Belongs to the LuxS family. As to quaternary structure, homodimer. It depends on Fe cation as a cofactor.

The catalysed reaction is S-(5-deoxy-D-ribos-5-yl)-L-homocysteine = (S)-4,5-dihydroxypentane-2,3-dione + L-homocysteine. Its function is as follows. Involved in the synthesis of autoinducer 2 (AI-2) which is secreted by bacteria and is used to communicate both the cell density and the metabolic potential of the environment. The regulation of gene expression in response to changes in cell density is called quorum sensing. Catalyzes the transformation of S-ribosylhomocysteine (RHC) to homocysteine (HC) and 4,5-dihydroxy-2,3-pentadione (DPD). In Vibrio parahaemolyticus serotype O3:K6 (strain RIMD 2210633), this protein is S-ribosylhomocysteine lyase.